A 45-amino-acid polypeptide reads, in one-letter code: Host translation inhibitor E66L (45 aa).

The protein belongs to the asfivirus E66L family.

The protein resides in the host endoplasmic reticulum. Inhibits host protein translation, probably through the EIF2AK2/EIF2S1 signaling pathway. Promotes cell retention in the G0/G1 phase. The polypeptide is Host translation inhibitor E66L (Ornithodoros (relapsing fever ticks)).